We begin with the raw amino-acid sequence, 396 residues long: Acetate kinase (396 aa).

Residue Asn-8 participates in Mg(2+) binding. Residue Lys-15 coordinates ATP. Position 90 (Arg-90) interacts with substrate. Catalysis depends on Asp-147, which acts as the Proton donor/acceptor. Residues 207 to 211 (HLGSG), 283 to 285 (DMR), and 330 to 334 (GIGEN) contribute to the ATP site. A Mg(2+)-binding site is contributed by Glu-384.

The protein belongs to the acetokinase family. In terms of assembly, homodimer. It depends on Mg(2+) as a cofactor. Mn(2+) serves as cofactor.

It is found in the cytoplasm. The enzyme catalyses acetate + ATP = acetyl phosphate + ADP. It participates in metabolic intermediate biosynthesis; acetyl-CoA biosynthesis; acetyl-CoA from acetate: step 1/2. In terms of biological role, catalyzes the formation of acetyl phosphate from acetate and ATP. Can also catalyze the reverse reaction. In Lacticaseibacillus paracasei (strain ATCC 334 / BCRC 17002 / CCUG 31169 / CIP 107868 / KCTC 3260 / NRRL B-441) (Lactobacillus paracasei), this protein is Acetate kinase.